The primary structure comprises 155 residues: Histone H2B.5 (155 aa).

2 stretches are compositionally biased toward basic and acidic residues: residues Met1–Pro28 and Glu36–Asp54. A disordered region spans residues Met1–Lys63. 2 positions are modified to N6-acetyllysine: Lys7 and Lys37. Lys151 participates in a covalent cross-link: Glycyl lysine isopeptide (Lys-Gly) (interchain with G-Cter in ubiquitin).

It belongs to the histone H2B family. As to quaternary structure, the nucleosome is a histone octamer containing two molecules each of H2A, H2B, H3 and H4 assembled in one H3-H4 heterotetramer and two H2A-H2B heterodimers. The octamer wraps approximately 147 bp of DNA. Post-translationally, can be acetylated to form H2BK6ac and H2BK33ac. In terms of processing, monoubiquitinated by BRE1 to form H2BK143ub1 and deubiquitinated by UBP26. Required for heterochromatic histone H3 di- and trimethylation at H3K4me. May give a specific tag for epigenetic transcriptional activation.

The protein localises to the nucleus. Its subcellular location is the chromosome. In terms of biological role, core component of nucleosome. Nucleosomes wrap and compact DNA into chromatin, limiting DNA accessibility to the cellular machineries which require DNA as a template. Histones thereby play a central role in transcription regulation, DNA repair, DNA replication and chromosomal stability. DNA accessibility is regulated via a complex set of post-translational modifications of histones, also called histone code, and nucleosome remodeling. The polypeptide is Histone H2B.5 (H2B.5) (Oryza sativa subsp. japonica (Rice)).